Consider the following 497-residue polypeptide: Glycerol kinase (497 aa).

T13 serves as a coordination point for ADP. 3 residues coordinate ATP: T13, T14, and S15. Sn-glycerol 3-phosphate is bound at residue T13. An ADP-binding site is contributed by R17. Positions 83, 84, and 135 each coordinate sn-glycerol 3-phosphate. Residues R83, E84, and Y135 each coordinate glycerol. H231 carries the post-translational modification Phosphohistidine; by HPr. Position 245 (D245) interacts with sn-glycerol 3-phosphate. Residues D245 and Q246 each coordinate glycerol. ADP-binding residues include T267 and G310. T267, G310, Q314, and G411 together coordinate ATP. Positions 411 and 415 each coordinate ADP.

This sequence belongs to the FGGY kinase family. Homotetramer and homodimer (in equilibrium). Post-translationally, the phosphoenolpyruvate-dependent sugar phosphotransferase system (PTS), including enzyme I, and histidine-containing protein (HPr) are required for the phosphorylation, which leads to the activation of the enzyme.

It catalyses the reaction glycerol + ATP = sn-glycerol 3-phosphate + ADP + H(+). The protein operates within polyol metabolism; glycerol degradation via glycerol kinase pathway; sn-glycerol 3-phosphate from glycerol: step 1/1. Activated by phosphorylation and inhibited by fructose 1,6-bisphosphate (FBP). Functionally, key enzyme in the regulation of glycerol uptake and metabolism. Catalyzes the phosphorylation of glycerol to yield sn-glycerol 3-phosphate. The chain is Glycerol kinase from Listeria monocytogenes serotype 4a (strain HCC23).